The primary structure comprises 423 residues: Protein CLP1 homolog (423 aa).

ATP is bound by residues Glu-16, Lys-57, and 119–124 (DVGKST).

The protein belongs to the Clp1 family. Clp1 subfamily.

Its subcellular location is the nucleus. In terms of biological role, required for endonucleolytic cleavage during polyadenylation-dependent pre-mRNA 3'-end formation. The protein is Protein CLP1 homolog (cbc) of Drosophila sechellia (Fruit fly).